A 181-amino-acid chain; its full sequence is Ribosome maturation factor RimP (181 aa).

The protein belongs to the RimP family.

The protein localises to the cytoplasm. In terms of biological role, required for maturation of 30S ribosomal subunits. The sequence is that of Ribosome maturation factor RimP from Sphingopyxis alaskensis (strain DSM 13593 / LMG 18877 / RB2256) (Sphingomonas alaskensis).